The chain runs to 200 residues: Cytochrome c biogenesis ATP-binding export protein CcmA (200 aa).

The 199-residue stretch at 2–200 (LDVIELDFDY…NKADYEEYHL (199 aa)) folds into the ABC transporter domain. 34–41 (GSNGAGKT) contacts ATP.

It belongs to the ABC transporter superfamily. CcmA exporter (TC 3.A.1.107) family. In terms of assembly, the complex is composed of two ATP-binding proteins (CcmA) and two transmembrane proteins (CcmB).

The protein localises to the cell inner membrane. The enzyme catalyses heme b(in) + ATP + H2O = heme b(out) + ADP + phosphate + H(+). Its function is as follows. Part of the ABC transporter complex CcmAB involved in the biogenesis of c-type cytochromes; once thought to export heme, this seems not to be the case, but its exact role is uncertain. Responsible for energy coupling to the transport system. The chain is Cytochrome c biogenesis ATP-binding export protein CcmA from Legionella pneumophila (strain Lens).